A 56-amino-acid polypeptide reads, in one-letter code: U4-myrmicitoxin-Tb1a (56 aa).

The N-terminal stretch at 1 to 26 (MQPSYLLLTFAIIFVMVIMYSPAVEA) is a signal peptide. The propeptide occupies 27–40 (KAGADADADAHADA). At G53 the chain carries Glycine amide.

In terms of processing, contains 1 disulfide bond. In terms of tissue distribution, expressed by the venom gland.

Its subcellular location is the secreted. In terms of biological role, venom protein with unknown function. Does not induce paralysis when a high dose is administered by intrathoracic injection into the blowfly Lucilia caesar. This is U4-myrmicitoxin-Tb1a from Tetramorium bicarinatum (Tramp ant).